We begin with the raw amino-acid sequence, 834 residues long: Leucine--tRNA ligase (834 aa).

A 'HIGH' region motif is present at residues 42 to 52 (PYPSGKLHMGH). Residues 619-623 (KMSKS) carry the 'KMSKS' region motif. Lysine 622 is an ATP binding site.

This sequence belongs to the class-I aminoacyl-tRNA synthetase family.

It localises to the cytoplasm. It carries out the reaction tRNA(Leu) + L-leucine + ATP = L-leucyl-tRNA(Leu) + AMP + diphosphate. The polypeptide is Leucine--tRNA ligase (Actinobacillus pleuropneumoniae serotype 7 (strain AP76)).